The primary structure comprises 268 residues: Gasdermin bGSDM (268 aa).

Cysteine 3 is lipidated: S-palmitoyl cysteine. Transmembrane regions (beta stranded) follow at residues 78–94 (IDLRKTNSLSSAVAAKI), 103–121 (APSFDLAFENSSSVIFHIE), 168–185 (KMRMQFERKNKGELGVDV), and 195–211 (AKLESKIEGSTYDRLVF). A C-terminal region region spans residues 248 to 268 (GENMALNLFTEIQDAGFIEVT).

It belongs to the bacterial gasdermin family. In terms of assembly, monomer in solution. Forms large, homooligomeric ring-shaped pores when inserted in membranes. In terms of processing, cleavage by the adjacently encoded protease (G563DRAFT_02009) between Leu-247 and Gly-248 relieves autoinhibition, releasing the N-terminus which initiates loss of cell integrity. Post-translationally, palmitoylation helps stabilize the inactive state; may self-palmitoylate. Palmitoylation is not required for permeabilization of liposomes by the ring-like pores in vitro. Palmitoylation plays a significant role in pore formation.

The protein resides in the cytoplasm. It localises to the cell inner membrane. Its activity is regulated as follows. The full-length protein before cleavage is inactive: intramolecular interactions between the N-terminal domain and the C-terminal region, as well as the lipid modification, mediate autoinhibition. The pyroptosis-like-inducing activity is carried by the released N-terminal domain (gasdermin bGSDM, N-terminus). Its function is as follows. Precursor of a pore-forming protein involved in defense against bacteriophages. Cleavage of this precursor by its dedicated, neighboring protease (G563DRAFT_02009) releases the active moiety (gasdermin bGSDM, N-terminus) which inserts into membranes, forming pores and triggering cell death. Expression of bGSDM and its protease is highly toxic in E.coli. Cells expressing the gene pair stop dividing and lose membrane integrity. Both proteins are required to kill E.coli. Pore-forming protein that causes membrane permeabilization via a pyroptosis-like activity. Makes ring-like pores with walls about 50 Angstroms thick and an interior pore diameter of 200-300 Angstroms, when integrated in liposomes. The sequence is that of Gasdermin bGSDM from Runella zeae (strain ATCC BAA-293 / DSM 19591 / LMG 21438 / NS12).